A 330-amino-acid polypeptide reads, in one-letter code: Phenylalanine--tRNA ligase alpha subunit (330 aa).

A Mg(2+)-binding site is contributed by E255.

Belongs to the class-II aminoacyl-tRNA synthetase family. Phe-tRNA synthetase alpha subunit type 1 subfamily. Tetramer of two alpha and two beta subunits. Mg(2+) is required as a cofactor.

Its subcellular location is the cytoplasm. The enzyme catalyses tRNA(Phe) + L-phenylalanine + ATP = L-phenylalanyl-tRNA(Phe) + AMP + diphosphate + H(+). In Acinetobacter baylyi (strain ATCC 33305 / BD413 / ADP1), this protein is Phenylalanine--tRNA ligase alpha subunit.